Reading from the N-terminus, the 622-residue chain is Probable potassium transport system protein Kup (622 aa).

12 consecutive transmembrane segments (helical) span residues 8 to 28, 50 to 70, 103 to 123, 137 to 157, 169 to 189, 215 to 235, 247 to 267, 285 to 305, 337 to 357, 366 to 386, 393 to 413, and 419 to 439; these read LAAL…TSVL, VLSI…VVLV, LGIG…TPAI, PHFG…LFAV, FGPV…PHIV, FIIL…YADL, WFSV…ALLL, ALIP…QALI, IYIP…VVMF, AYGI…FFVI, PLAL…AFFG, and LLQG…LMMT.

The protein belongs to the HAK/KUP transporter (TC 2.A.72) family.

It is found in the cell inner membrane. It carries out the reaction K(+)(in) + H(+)(in) = K(+)(out) + H(+)(out). Transport of potassium into the cell. Likely operates as a K(+):H(+) symporter. In Paracidovorax citrulli (strain AAC00-1) (Acidovorax citrulli), this protein is Probable potassium transport system protein Kup.